A 559-amino-acid chain; its full sequence is Phosphoinositide 3-phosphatase (559 aa).

The Myotubularin phosphatase domain maps to 120-541; the sequence is SWKSFLLENE…SSLRWWSASF (422 aa). The Phosphocysteine intermediate role is filled by C342.

This sequence belongs to the protein-tyrosine phosphatase family. Non-receptor class myotubularin subfamily.

The protein resides in the cytoplasm. It catalyses the reaction a 1,2-diacyl-sn-glycero-3-phospho-(1D-myo-inositol-3-phosphate) + H2O = a 1,2-diacyl-sn-glycero-3-phospho-(1D-myo-inositol) + phosphate. Functionally, lipid phosphatase which dephosphorylates phosphatidylinositol 3-monophosphate (PI3P). Involved in the control of PI3P-dependent signaling and in the maintenance of endosomal system integrity. The chain is Phosphoinositide 3-phosphatase from Schizosaccharomyces pombe (strain 972 / ATCC 24843) (Fission yeast).